A 1176-amino-acid chain; its full sequence is Leucine--tRNA ligase, cytoplasmic (1176 aa).

Tyr-52 and Tyr-54 together coordinate L-leucine. The 'HIGH' region motif lies at 60 to 63 (HLGH). Ser-167 is subject to Phosphoserine. The tract at residues 260–509 (GPQEYTLLKL…DAGDALIYME (250 aa)) is editing domain. The L-leucine site is built by Leu-594 and Ser-597. A 'KMSKS' region motif is present at residues 716 to 720 (KMSKS). Lys-719 is an ATP binding site. Ser-720 is subject to Phosphoserine. Lys-970 and Lys-1047 each carry N6-acetyllysine.

Belongs to the class-I aminoacyl-tRNA synthetase family. Part of the aminoacyl-tRNA synthetase multienzyme complex, also known as multisynthetase complex (MSC), that is composed of the aminoacyl-tRNA ligases for Arg (RARS1), Asp (DARS1), Gln (QARS1), Ile (IARS1), Leu (LARS1), Lys (KARS1), Met (MARS1) the bifunctional ligase for Glu and Pro (EPRS1) and the auxiliary subunits AIMP1/p43, AIMP2/p38 and EEF1E1/p18.

The protein localises to the cytoplasm. The enzyme catalyses tRNA(Leu) + L-leucine + ATP = L-leucyl-tRNA(Leu) + AMP + diphosphate. It catalyses the reaction L-methionyl-tRNA(Leu) + H2O = tRNA(Leu) + L-methionine + H(+). With respect to regulation, 5-fluoro-1,3-dihydro-1-hydroxy-1,2-benzoxaborole inhibits LARS1 by forming a covalent adduct with the 3' adenosine of tRNA(Leu) at the editing site, thus locking the enzyme in an inactive conformation. Its function is as follows. Aminoacyl-tRNA synthetase that catalyzes the specific attachment of leucine to its cognate tRNA (tRNA(Leu)). It performs tRNA aminoacylation in a two-step reaction: Leu is initially activated by ATP to form a leucyl-adenylate (Leu-AMP) intermediate; then the leucyl moiety is transferred to the acceptor 3' end of the tRNA to yield leucyl-tRNA. To improve the fidelity of catalytic reactions, it is also able to hydrolyze misactivated aminoacyl-adenylate intermediates (pre-transfer editing) and mischarged aminoacyl-tRNAs (post-transfer editing). This Homo sapiens (Human) protein is Leucine--tRNA ligase, cytoplasmic.